The primary structure comprises 293 residues: MDSGLRSLLSDHSRYVESFRLFLLNSTEHQCMQRFIDTQFPHIVSSIGKDKSVIDILGIGSGSGEIDLQMIGKIQSRHPGVAISNQIVEPSAEQIIGYKERVAKAPNLGAVSFSWHRQTSSEYERQVNEEKQMRSYDFIHMIQMLYYVKDVPATLRFFKSCLAPNGKLLIILVSGNSGWSMLWKKHGPQLPLNDLCLYVTAGDIAQMLSSMGARFQSYELPSDMDITECFIEGDRNGEMLLDFLTETCDFKRNAPADLREQILCDLKSPECSTTRDGKVIFNNNLSVIVVERD.

E28 is a binding site for substrate. S-adenosyl-L-methionine-binding residues include G60, E89, Q94, S120, and I142. Residue N283 participates in substrate binding.

Belongs to the class I-like SAM-binding methyltransferase superfamily. HNMT family. In terms of assembly, monomer.

It is found in the cytoplasm. It catalyses the reaction histamine + S-adenosyl-L-methionine = N(tau)-methylhistamine + S-adenosyl-L-homocysteine + H(+). In terms of biological role, inactivates histamine by N-methylation. Plays an important role in degrading histamine and in regulating the airway response to histamine. The protein is Histamine N-methyltransferase (hnmt) of Xenopus tropicalis (Western clawed frog).